Consider the following 127-residue polypeptide: Translation initiation factor 5A (127 aa).

The residue at position 35 (lysine 35) is a Hypusine.

It belongs to the eIF-5A family.

It is found in the cytoplasm. In terms of biological role, functions by promoting the formation of the first peptide bond. The polypeptide is Translation initiation factor 5A (eIF5A) (Methanothrix thermoacetophila (strain DSM 6194 / JCM 14653 / NBRC 101360 / PT) (Methanosaeta thermophila)).